Consider the following 274-residue polypeptide: MTEFTTLLQQGNAWFFIPSVILLGALHGLEPGHSKTMMAAFIIAIKGTIKQAVMLGLAATISHTAVVWLIAFGGMVISKRFTAQSAEPWLQLISAVIIISTAFWMFWRTWRGERNWLENMHGHDYEHHHHDHEHHHDHGHHHHHEHGEYQDAHARAHANDIKRRFDGREVTNWQILLFGLTGGLIPCPAAITVLLICIQLKALTLGATLVVSFSIGLALTLVTVGVGAAISVQQVAKRWSGFNTLAKRAPYFSSLLIGLVGVYMGVHGFMGIMR.

Topologically, residues 1 to 12 (MTEFTTLLQQGN) are periplasmic. The helical transmembrane segment at 13 to 33 (AWFFIPSVILLGALHGLEPGH) threads the bilayer. At 34–56 (SKTMMAAFIIAIKGTIKQAVMLG) the chain is on the cytoplasmic side. Residues 57-77 (LAATISHTAVVWLIAFGGMVI) traverse the membrane as a helical segment. Over 78–86 (SKRFTAQSA) the chain is Periplasmic. A helical membrane pass occupies residues 87–107 (EPWLQLISAVIIISTAFWMFW). Topologically, residues 108–174 (RTWRGERNWL…FDGREVTNWQ (67 aa)) are cytoplasmic. The disordered stretch occupies residues 127 to 153 (HHHHDHEHHHDHGHHHHHEHGEYQDAH). Residues 129–144 (HHDHEHHHDHGHHHHH) are compositionally biased toward basic residues. A helical transmembrane segment spans residues 175-195 (ILLFGLTGGLIPCPAAITVLL). Over 196–209 (ICIQLKALTLGATL) the chain is Periplasmic. The helical transmembrane segment at 210 to 230 (VVSFSIGLALTLVTVGVGAAI) threads the bilayer. At 231 to 251 (SVQQVAKRWSGFNTLAKRAPY) the chain is on the cytoplasmic side. A helical transmembrane segment spans residues 252 to 272 (FSSLLIGLVGVYMGVHGFMGI). Over 273-274 (MR) the chain is Periplasmic.

This sequence belongs to the NiCoT transporter (TC 2.A.52) family. RcnA subfamily.

It localises to the cell inner membrane. In terms of biological role, efflux system for nickel and cobalt. The sequence is that of Nickel/cobalt efflux system RcnA (rcnA) from Escherichia coli O9:H4 (strain HS).